Here is a 353-residue protein sequence, read N- to C-terminus: Photosystem II D2 protein (353 aa).

Thr-2 is subject to N-acetylthreonine. Thr-2 carries the phosphothreonine modification. Residues 41-61 (CAYFALGGWFTGTTFVTSWYT) traverse the membrane as a helical segment. Residue His-118 participates in chlorophyll a binding. A helical membrane pass occupies residues 125–141 (GFMLRQFELARSVQLRP). Pheophytin a contacts are provided by Gln-130 and Asn-143. A helical membrane pass occupies residues 153 to 166 (VFVSVFLIYPLGQS). His-198 serves as a coordination point for chlorophyll a. A helical transmembrane segment spans residues 208–228 (AALLCAIHGATVENLYFEDGD). Residues His-215 and Phe-262 each contribute to the a plastoquinone site. Position 215 (His-215) interacts with Fe cation. Position 269 (His-269) interacts with Fe cation. Residues 279-295 (GLWMSALGVVGLALNLR) form a helical membrane-spanning segment.

This sequence belongs to the reaction center PufL/M/PsbA/D family. In terms of assembly, PSII is composed of 1 copy each of membrane proteins PsbA, PsbB, PsbC, PsbD, PsbE, PsbF, PsbH, PsbI, PsbJ, PsbK, PsbL, PsbM, PsbT, PsbX, PsbY, PsbZ, Psb30/Ycf12, at least 3 peripheral proteins of the oxygen-evolving complex and a large number of cofactors. It forms dimeric complexes. It depends on The D1/D2 heterodimer binds P680, chlorophylls that are the primary electron donor of PSII, and subsequent electron acceptors. It shares a non-heme iron and each subunit binds pheophytin, quinone, additional chlorophylls, carotenoids and lipids. There is also a Cl(-1) ion associated with D1 and D2, which is required for oxygen evolution. The PSII complex binds additional chlorophylls, carotenoids and specific lipids. as a cofactor.

The protein resides in the plastid. Its subcellular location is the chloroplast thylakoid membrane. The enzyme catalyses 2 a plastoquinone + 4 hnu + 2 H2O = 2 a plastoquinol + O2. Its function is as follows. Photosystem II (PSII) is a light-driven water:plastoquinone oxidoreductase that uses light energy to abstract electrons from H(2)O, generating O(2) and a proton gradient subsequently used for ATP formation. It consists of a core antenna complex that captures photons, and an electron transfer chain that converts photonic excitation into a charge separation. The D1/D2 (PsbA/PsbD) reaction center heterodimer binds P680, the primary electron donor of PSII as well as several subsequent electron acceptors. D2 is needed for assembly of a stable PSII complex. This Panax ginseng (Korean ginseng) protein is Photosystem II D2 protein.